The following is a 375-amino-acid chain: MDWIEREKKHILQTYTRQKVVIERGEGCYVYDVNGKRYLDLVAGIATVSIGHCNSHLVERLKEQLEKLIHISNLYYTTPQVELAEKLSEIAGMDRFFFCNSGAEAVEAALKFARRATGRKKFVSFTGDFHGRTMGALSVTHKEKFRKPFEPLVSPVEFAEFNNPESLEKVVDEETAAVIVELVQGEAGVYPADREFVKAIEELREKYGFLLIVDEVQTGFGRTGRWFAKDHYGIEPDMITMAKAMGSGVPIGCCALKEEVAEKIQVGDHGSTFGGNPLACTAALATIEVIEREGLVENSARMGEYFVKRLKESFENVIGVGLMIGFDVGDAAEFVRKCLENGLLVNNTSERRIRLVPPLVITEREVDKAVEIMLN.

Residues 102–103 (GA) and Phe129 contribute to the pyridoxal 5'-phosphate site. A N(2)-acetyl-L-ornithine-binding site is contributed by Arg132. A pyridoxal 5'-phosphate-binding site is contributed by 214–217 (DEVQ). Lys243 is subject to N6-(pyridoxal phosphate)lysine. Position 271 (Ser271) interacts with N(2)-acetyl-L-ornithine. Thr272 is a binding site for pyridoxal 5'-phosphate.

This sequence belongs to the class-III pyridoxal-phosphate-dependent aminotransferase family. ArgD subfamily. Homodimer. It depends on pyridoxal 5'-phosphate as a cofactor.

Its subcellular location is the cytoplasm. It carries out the reaction N(2)-acetyl-L-ornithine + 2-oxoglutarate = N-acetyl-L-glutamate 5-semialdehyde + L-glutamate. The protein operates within amino-acid biosynthesis; L-arginine biosynthesis; N(2)-acetyl-L-ornithine from L-glutamate: step 4/4. The polypeptide is Acetylornithine aminotransferase (Archaeoglobus fulgidus (strain ATCC 49558 / DSM 4304 / JCM 9628 / NBRC 100126 / VC-16)).